Here is a 734-residue protein sequence, read N- to C-terminus: Cell surface glycoprotein gp138B (734 aa).

The first 20 residues, 1–20 (MKIILTLSIFLICFLQLGQS), serve as a signal peptide directing secretion. Residues Asn58, Asn89, Asn124, Asn198, Asn224, Asn392, Asn420, Asn435, Asn482, Asn498, Asn523, Asn596, Asn605, Asn614, Asn621, and Asn630 are each glycosylated (N-linked (GlcNAc...) asparagine). The IPT/TIG domain maps to 504–592 (PFIKSYGFLE…SSNEVTFYYF (89 aa)). Residues 678–712 (GETPTPSTTPSTTPSTTPSTTPSSTPTQSPGDDGS) are disordered. Low complexity predominate over residues 680-712 (TPTPSTTPSTTPSTTPSTTPSSTPTQSPGDDGS). A run of 4 repeats spans residues 683-686 (PSTT), 687-690 (PSTT), 691-694 (PSTT), and 695-698 (PSTT). The segment at 683–698 (PSTTPSTTPSTTPSTT) is 4 X 4 AA tandem repeats of P-S-T-T. Gly708 carries GPI-like-anchor amidated glycine lipidation. The propeptide at 709–734 (DDGSTSSTLSISFYLITLLLLTQQFI) is removed in mature form.

In terms of processing, the sugar chains may play important roles in cell fusion. The GPI-like-anchor contains a phosphoceramide group, rather than a phosphatidyl group.

It is found in the cell membrane. Functionally, involved in the sexual cell fusion of D.discoideum. This Dictyostelium discoideum (Social amoeba) protein is Cell surface glycoprotein gp138B (GP138B).